The primary structure comprises 432 residues: Glutamyl-tRNA reductase (432 aa).

Substrate-binding positions include 55-58 (TCNR), S114, 119-121 (ETQ), and Q125. The active-site Nucleophile is the C56. Residue 194–199 (GAGEMI) participates in NADP(+) binding.

Belongs to the glutamyl-tRNA reductase family. As to quaternary structure, homodimer.

The catalysed reaction is (S)-4-amino-5-oxopentanoate + tRNA(Glu) + NADP(+) = L-glutamyl-tRNA(Glu) + NADPH + H(+). It functions in the pathway porphyrin-containing compound metabolism; protoporphyrin-IX biosynthesis; 5-aminolevulinate from L-glutamyl-tRNA(Glu): step 1/2. Its function is as follows. Catalyzes the NADPH-dependent reduction of glutamyl-tRNA(Glu) to glutamate 1-semialdehyde (GSA). In Burkholderia ambifaria (strain MC40-6), this protein is Glutamyl-tRNA reductase.